Consider the following 324-residue polypeptide: UDP-galactose transporter homolog 1 (324 aa).

2 consecutive transmembrane segments (helical) span residues 7–27 and 42–62; these read LVIAVCGIYATFLTWSLAQEP and HSSFIVLCQALTAAVVGLCYL. Residue N97 is glycosylated (N-linked (GlcNAc...) asparagine). 7 consecutive transmembrane segments (helical) span residues 106–126, 135–155, 161–181, 199–219, 237–257, 265–285, and 290–310; these read VGYMLAKSCKLLPIMLVHVLV, KALVGVLVSGGVALFTLGGAE, ASLYGLGMLLVSLFLDGLTNA, HLMVALNTAIVLWNLAYLVLF, ILTYLFTYCACGALGQCFVFF, LVLATVTVTRKMVSMLLSIVV, and VRPVQWLGILVVFGGIIWETV.

The protein belongs to the nucleotide-sugar transporter family. SLC35B subfamily.

Its subcellular location is the endoplasmic reticulum membrane. Its function is as follows. May be involved in specific transport of UDP-Gal from the cytosol to the Golgi lumen. Involved in the maintenance of optimal conditions for the folding of secretory pathway proteins in the endoplasmic reticulum. This chain is UDP-galactose transporter homolog 1 (HUT1), found in Eremothecium gossypii (strain ATCC 10895 / CBS 109.51 / FGSC 9923 / NRRL Y-1056) (Yeast).